A 114-amino-acid polypeptide reads, in one-letter code: DNA-directed RNA polymerase subunit Rpo4 (114 aa).

Belongs to the eukaryotic RPB4 RNA polymerase subunit family. In terms of assembly, part of the 13-subunit RNA polymerase complex. Forms a stalk with Rpo7 that extends from the main structure. In purified enzyme appears as 5 forms, each differing by about 200 Da of a covalently bound, negatively charged residue. Not glycosylated.

It is found in the cytoplasm. It catalyses the reaction RNA(n) + a ribonucleoside 5'-triphosphate = RNA(n+1) + diphosphate. Its function is as follows. DNA-dependent RNA polymerase catalyzes the transcription of DNA into RNA using the four ribonucleoside triphosphates as substrates. This subunit is less well bound than the others. Probably not involved in transcription initiation. In Sulfolobus acidocaldarius (strain ATCC 33909 / DSM 639 / JCM 8929 / NBRC 15157 / NCIMB 11770), this protein is DNA-directed RNA polymerase subunit Rpo4.